Here is a 160-residue protein sequence, read N- to C-terminus: Transcription elongation factor GreA (160 aa).

The stretch at 1 to 72 forms a coiled coil; that stretch reads MAEKTYPMTL…QISSLETKIR (72 aa).

The protein belongs to the GreA/GreB family.

Necessary for efficient RNA polymerase transcription elongation past template-encoded arresting sites. The arresting sites in DNA have the property of trapping a certain fraction of elongating RNA polymerases that pass through, resulting in locked ternary complexes. Cleavage of the nascent transcript by cleavage factors such as GreA or GreB allows the resumption of elongation from the new 3'terminus. GreA releases sequences of 2 to 3 nucleotides. The sequence is that of Transcription elongation factor GreA from Streptococcus sanguinis (strain SK36).